The chain runs to 429 residues: Trigger factor (429 aa).

The 86-residue stretch at 161–246 (EDRVTIDFTG…LKKVEERELP (86 aa)) folds into the PPIase FKBP-type domain.

It belongs to the FKBP-type PPIase family. Tig subfamily. As to quaternary structure, homodimer and monomer. In vivo most of the ribosomes are in complex with monomeric TF. Uncomplexed TF, however, is in a monomer-dimer equilibrium with approximately two thirds of TF existing in a dimeric state.

It is found in the cytoplasm. It catalyses the reaction [protein]-peptidylproline (omega=180) = [protein]-peptidylproline (omega=0). Its function is as follows. Involved in protein export. Acts as a chaperone by maintaining the newly synthesized protein in an open conformation. Functions as a peptidyl-prolyl cis-trans isomerase. In Escherichia coli O45:K1 (strain S88 / ExPEC), this protein is Trigger factor.